Here is a 133-residue protein sequence, read N- to C-terminus: Cytochrome c' (133 aa).

The heme c site is built by Arg-12, Thr-72, Cys-122, Cys-125, and His-126.

In terms of processing, binds 1 heme c group covalently per subunit.

Its function is as follows. Cytochrome c' is the most widely occurring bacterial c-type cytochrome. Cytochromes c' are high-spin proteins and the heme has no sixth ligand. Their exact function is not known. In Rhodocyclus tenuis (Rhodospirillum tenue), this protein is Cytochrome c'.